The following is a 323-amino-acid chain: MDARRKHWKDNTFTPFLNEHDFQEAAAPPQPLSEQSSADNHKRMGRVSNFSVRNTQEGNKFKRKDYSSQIAEGEQDSNLRERRMNVSKNDANTNSAFWDSLHLDDATKESSHRRESASAWNKKKLPAATQVTRKKWTEAMPPKLRLHLLNEELGELSLKCREIERDFENAEKELLNFRKEASVKAVNFQEPGTGASKKDRELQALKNDLSEKATNVKNLTEELQQAKEVMYRLSLENRNLKDAVRKLKHQTELNTALLREEMKLFYELEMEKIRLELGAIKNELRVEKTLRVKNSRALEVLGRHVASVVRSSNPADHFTGNIF.

The disordered stretch occupies residues 1-81 (MDARRKHWKD…EGEQDSNLRE (81 aa)). Polar residues predominate over residues 48–58 (SNFSVRNTQEG). Residues 144–289 (LRLHLLNEEL…IKNELRVEKT (146 aa)) adopt a coiled-coil conformation.

Belongs to the CCDC160 family.

The sequence is that of Coiled-coil domain-containing protein 160 (Ccdc160) from Mus musculus (Mouse).